The following is a 543-amino-acid chain: Hydroxylamine reductase (543 aa).

[4Fe-4S] cluster-binding residues include C5, C8, C17, and C23. Residues H236, E260, C304, C398, C426, C451, E486, and K488 each coordinate hybrid [4Fe-2O-2S] cluster. A Cysteine persulfide modification is found at C398.

This sequence belongs to the HCP family. Requires [4Fe-4S] cluster as cofactor. The cofactor is hybrid [4Fe-2O-2S] cluster.

It localises to the cytoplasm. The catalysed reaction is A + NH4(+) + H2O = hydroxylamine + AH2 + H(+). Catalyzes the reduction of hydroxylamine to form NH(3) and H(2)O. The sequence is that of Hydroxylamine reductase from Bacteroides fragilis (strain YCH46).